Consider the following 681-residue polypeptide: Long-chain-fatty-acid--CoA ligase heimdall (681 aa).

Residues 223 to 231 (TSGTVGMPK), 414 to 419 (ECYGMS), D491, R506, and K639 contribute to the ATP site.

Belongs to the ATP-dependent AMP-binding enzyme family. Bubblegum subfamily.

The catalysed reaction is a long-chain fatty acid + ATP + CoA = a long-chain fatty acyl-CoA + AMP + diphosphate. Its function is as follows. Mediates activation of long-chain fatty acids for both synthesis of cellular lipids, and degradation via beta-oxidation. Probably by regulating lipid storage and catabolism, plays a role in neuronal function. This Drosophila melanogaster (Fruit fly) protein is Long-chain-fatty-acid--CoA ligase heimdall.